The primary structure comprises 290 residues: Ribosomal protein L11 methyltransferase (290 aa).

Residues Thr135, Gly158, Asp180, and Asn227 each coordinate S-adenosyl-L-methionine.

It belongs to the methyltransferase superfamily. PrmA family.

Its subcellular location is the cytoplasm. It catalyses the reaction L-lysyl-[protein] + 3 S-adenosyl-L-methionine = N(6),N(6),N(6)-trimethyl-L-lysyl-[protein] + 3 S-adenosyl-L-homocysteine + 3 H(+). Functionally, methylates ribosomal protein L11. In Mesorhizobium japonicum (strain LMG 29417 / CECT 9101 / MAFF 303099) (Mesorhizobium loti (strain MAFF 303099)), this protein is Ribosomal protein L11 methyltransferase.